A 343-amino-acid polypeptide reads, in one-letter code: Ribosomal RNA small subunit methyltransferase C (343 aa).

It belongs to the methyltransferase superfamily. RsmC family. Monomer.

Its subcellular location is the cytoplasm. The enzyme catalyses guanosine(1207) in 16S rRNA + S-adenosyl-L-methionine = N(2)-methylguanosine(1207) in 16S rRNA + S-adenosyl-L-homocysteine + H(+). Functionally, specifically methylates the guanine in position 1207 of 16S rRNA in the 30S particle. The protein is Ribosomal RNA small subunit methyltransferase C of Shewanella sediminis (strain HAW-EB3).